A 381-amino-acid polypeptide reads, in one-letter code: Magnesium transporter MRS2-I (381 aa).

The next 2 helical transmembrane spans lie at 316-336 (LFLSSGTVCLSLYSLVAGIFG) and 353-373 (WVVLVSGLFCAFMFVSIVAYA). Residues 336–338 (GMN) carry the Required for magnesium transport activity motif.

It belongs to the CorA metal ion transporter (MIT) (TC 1.A.35.5) family.

The protein resides in the membrane. Functionally, magnesium transporter that may mediate the influx of magnesium. The protein is Magnesium transporter MRS2-I (MRS2-I) of Oryza sativa subsp. indica (Rice).